We begin with the raw amino-acid sequence, 136 residues long: ATP synthase epsilon chain (136 aa).

The tract at residues 112–136 (GNSADKLKAKESLNKARARSQAVGE) is disordered. A compositionally biased stretch (basic and acidic residues) spans 116 to 125 (DKLKAKESLN).

The protein belongs to the ATPase epsilon chain family. In terms of assembly, F-type ATPases have 2 components, CF(1) - the catalytic core - and CF(0) - the membrane proton channel. CF(1) has five subunits: alpha(3), beta(3), gamma(1), delta(1), epsilon(1). CF(0) has three main subunits: a, b and c.

The protein localises to the cellular thylakoid membrane. Its function is as follows. Produces ATP from ADP in the presence of a proton gradient across the membrane. The sequence is that of ATP synthase epsilon chain from Prochlorococcus marinus (strain SARG / CCMP1375 / SS120).